Reading from the N-terminus, the 458-residue chain is tRNA modification GTPase MnmE (458 aa).

3 residues coordinate (6S)-5-formyl-5,6,7,8-tetrahydrofolate: Arg26, Glu88, and Arg127. In terms of domain architecture, TrmE-type G spans Gly224–Phe378. Residue Asn234 participates in K(+) binding. Residues Asn234 to Ser239, Thr253 to Thr259, and Asp278 to Gly281 each bind GTP. Ser238 lines the Mg(2+) pocket. K(+)-binding residues include Thr253, Ile255, and Thr258. Thr259 contacts Mg(2+). Lys458 provides a ligand contact to (6S)-5-formyl-5,6,7,8-tetrahydrofolate.

It belongs to the TRAFAC class TrmE-Era-EngA-EngB-Septin-like GTPase superfamily. TrmE GTPase family. Homodimer. Heterotetramer of two MnmE and two MnmG subunits. K(+) is required as a cofactor.

It localises to the cytoplasm. In terms of biological role, exhibits a very high intrinsic GTPase hydrolysis rate. Involved in the addition of a carboxymethylaminomethyl (cmnm) group at the wobble position (U34) of certain tRNAs, forming tRNA-cmnm(5)s(2)U34. This is tRNA modification GTPase MnmE from Streptococcus pyogenes serotype M1.